A 471-amino-acid chain; its full sequence is MKDSIVLYSALGRGHLVSMVELGKLILSHHPSLSITILFLTPPPNQDTPTSPTAFTCDATAKYIAAVTAATPSITFHRIPQISIPTVLPPMALTFELCRATGHHLRRILTSISQTSNLKAIVLDFMNYSAARVTNTLQIPTYFYYTSGASTLAVLFQQIIIHQNNTKSIKDLNMHLLIPGLPKIHTDDMPEQVQDRENEGYEVFIDIATCMRDSDGVIVNTFEAMEGRVMEAFNEGLMEGPTPPLFCIGPVISSAPCRVDDDGCLSWLDSQPSHSVVFLSFGSMGRFSRTQLREIAIGLEKSEQRFLWVVRSEFEEGDSVEPPSLDELLPEGFLERTKGKGMVLRDWAPQAAILSHDSVGGFVTHCGWNSVLEAVCEGVPMVAWPLYAEQKLNKVILVEEMKVGLAVKQNKDGLVSSTELGDRVRELMDSDRGKEIRQKIFKMKMSANEAMAKGGSSIMALNRLVEVWREH.

The Proton acceptor role is filled by His-15. An an anthocyanidin-binding site is contributed by His-15. Asp-124 acts as the Charge relay in catalysis. UDP-alpha-D-glucose is bound by residues Thr-146, Ala-348, Gln-350, His-365, Trp-368, Asn-369, Ser-370, and Glu-373. Residue Ala-388 coordinates an anthocyanidin. Positions 389 and 390 each coordinate UDP-alpha-D-glucose.

This sequence belongs to the UDP-glycosyltransferase family. Expressed in roots. Detected in stems and leaves.

The enzyme catalyses a 7-hydroxyisoflavone + UDP-alpha-D-glucose = a 7-hydroxyisoflavone 7-O-beta-D-glucoside + UDP + H(+). In terms of biological role, isoflavone 7-O-glucosyltransferase converting daidzein to daidzin, genistein to genistin and formononetin to ononin. Shows some activity toward the chalcone isoliquiritigenin, the flavanones liquiritigenin and naringenin, and the flavone apigenin, but not toward cyanidin, luteolin, kaempferol, quercetin, daidzin and puerarin. The sequence is that of UDP-glycosyltransferase 1 from Pueraria montana var. lobata (Kudzu vine).